The sequence spans 244 residues: 2,3-bisphosphoglycerate-dependent phosphoglycerate mutase (244 aa).

Residues 8 to 15 (RHGESNWN), 21 to 22 (TG), Arg60, 87 to 90 (ERHY), Lys98, 114 to 115 (RR), and 181 to 182 (GN) each bind substrate. The active-site Tele-phosphohistidine intermediate is His9. Glu87 acts as the Proton donor/acceptor in catalysis.

The protein belongs to the phosphoglycerate mutase family. BPG-dependent PGAM subfamily.

It catalyses the reaction (2R)-2-phosphoglycerate = (2R)-3-phosphoglycerate. It participates in carbohydrate degradation; glycolysis; pyruvate from D-glyceraldehyde 3-phosphate: step 3/5. Functionally, catalyzes the interconversion of 2-phosphoglycerate and 3-phosphoglycerate. The chain is 2,3-bisphosphoglycerate-dependent phosphoglycerate mutase from Frankia alni (strain DSM 45986 / CECT 9034 / ACN14a).